The chain runs to 742 residues: 5-methyltetrahydropteroyltriglutamate--homocysteine methyltransferase (742 aa).

5-methyltetrahydropteroyltri-L-glutamate contacts are provided by residues 18 to 21 (REWK) and Lys-112. L-homocysteine contacts are provided by residues 420–422 (IGS) and Glu-473. L-methionine-binding positions include 420–422 (IGS) and Glu-473. 5-methyltetrahydropteroyltri-L-glutamate is bound at residue Trp-550. Asp-588 is an L-homocysteine binding site. L-methionine is bound at residue Asp-588. Position 594 (Glu-594) interacts with 5-methyltetrahydropteroyltri-L-glutamate. Positions 630, 632, and 654 each coordinate Zn(2+). His-683 acts as the Proton donor in catalysis. A Zn(2+)-binding site is contributed by Cys-715.

The protein belongs to the vitamin-B12 independent methionine synthase family. Zn(2+) serves as cofactor.

The enzyme catalyses 5-methyltetrahydropteroyltri-L-glutamate + L-homocysteine = tetrahydropteroyltri-L-glutamate + L-methionine. The protein operates within amino-acid biosynthesis; L-methionine biosynthesis via de novo pathway; L-methionine from L-homocysteine (MetE route): step 1/1. Functionally, catalyzes the transfer of a methyl group from 5-methyltetrahydrofolate to homocysteine resulting in methionine formation. The protein is 5-methyltetrahydropteroyltriglutamate--homocysteine methyltransferase of Staphylococcus aureus (strain Mu3 / ATCC 700698).